A 584-amino-acid chain; its full sequence is Proline--tRNA ligase (584 aa).

Residues 242-261 (APPASNPEERPATQVHDTPD) form a disordered region.

The protein belongs to the class-II aminoacyl-tRNA synthetase family. ProS type 1 subfamily. In terms of assembly, homodimer.

It is found in the cytoplasm. It catalyses the reaction tRNA(Pro) + L-proline + ATP = L-prolyl-tRNA(Pro) + AMP + diphosphate. In terms of biological role, catalyzes the attachment of proline to tRNA(Pro) in a two-step reaction: proline is first activated by ATP to form Pro-AMP and then transferred to the acceptor end of tRNA(Pro). As ProRS can inadvertently accommodate and process non-cognate amino acids such as alanine and cysteine, to avoid such errors it has two additional distinct editing activities against alanine. One activity is designated as 'pretransfer' editing and involves the tRNA(Pro)-independent hydrolysis of activated Ala-AMP. The other activity is designated 'posttransfer' editing and involves deacylation of mischarged Ala-tRNA(Pro). The misacylated Cys-tRNA(Pro) is not edited by ProRS. This chain is Proline--tRNA ligase, found in Salinispora arenicola (strain CNS-205).